Here is a 328-residue protein sequence, read N- to C-terminus: Gonadotropin-releasing hormone receptor (328 aa).

Residues Met1–Arg38 lie on the Extracellular side of the membrane. The N-linked (GlcNAc...) asparagine glycan is linked to Asn18. The helical transmembrane segment at Val39–Lys59 threads the bilayer. Residues Leu60 to Thr84 lie on the Cytoplasmic side of the membrane. The helical transmembrane segment at Leu85–Val105 threads the bilayer. The Extracellular portion of the chain corresponds to Gln106 to Lys115. Cys114 and Cys196 are disulfide-bonded. The helical transmembrane segment at Val116 to Ser136 threads the bilayer. The Cytoplasmic portion of the chain corresponds to Leu137–Arg157. Residues Ser158–Phe178 traverse the membrane as a helical segment. Residues Arg179–Gln208 lie on the Extracellular side of the membrane. The chain crosses the membrane as a helical span at residues Ala209–Ile229. Topologically, residues Cys230–Ala271 are cytoplasmic. Residues Phe272 to Phe292 traverse the membrane as a helical segment. Residues Asp293–His306 lie on the Extracellular side of the membrane. A helical membrane pass occupies residues Phe307–Ser327. Residue Leu328 is a topological domain, cytoplasmic.

Belongs to the G-protein coupled receptor 1 family.

The protein resides in the cell membrane. Its function is as follows. Receptor for gonadotropin releasing hormone (GnRH) that mediates the action of GnRH to stimulate the secretion of the gonadotropic hormones luteinizing hormone (LH) and follicle-stimulating hormone (FSH). This receptor mediates its action by association with G-proteins that activate a phosphatidylinositol-calcium second messenger system. The protein is Gonadotropin-releasing hormone receptor (GNRHR) of Equus caballus (Horse).